We begin with the raw amino-acid sequence, 164 residues long: Vasopressin-neurophysin 2-copeptin (164 aa).

A signal peptide spans 1-19 (MPDTMLPACFLGLLAFSSA). A disulfide bridge connects residues Cys20 and Cys25. Gly28 is subject to Glycine amide. 7 cysteine pairs are disulfide-bonded: Cys41–Cys85, Cys44–Cys58, Cys52–Cys75, Cys59–Cys65, Cys92–Cys104, Cys98–Cys116, and Cys105–Cys110. An N-linked (GlcNAc...) asparagine glycan is attached at Asn131.

It belongs to the vasopressin/oxytocin family. As to quaternary structure, interacts with vasopressin receptors V1bR/AVPR1B (Ki=85 pM), V1aR/AVPR1A (Ki=0.6 nM) and V2R/AVPR2 (Ki=4.9 nM). Interacts with oxytocin receptor (OXTR) (Ki=110 nM). In terms of assembly, (Microbial infection) May interact with SARS coronavirus-2/SARS-CoV-2; they may form a complex with secreted ACE2.

It localises to the secreted. In terms of biological role, specifically binds vasopressin. Has a direct antidiuretic action on the kidney, it also causes vasoconstriction of the peripheral vessels. Acts by binding to vasopressin receptors (V1bR/AVPR1B, V1aR/AVPR1A, and V2R/AVPR2). The polypeptide is Vasopressin-neurophysin 2-copeptin (AVP) (Homo sapiens (Human)).